A 494-amino-acid polypeptide reads, in one-letter code: 4-trimethylaminobutyraldehyde dehydrogenase (494 aa).

Ser-2 carries the N-acetylserine; in 4-trimethylaminobutyraldehyde dehydrogenase, N-terminally processed modification. At Lys-30 the chain carries N6-acetyllysine; alternate. The residue at position 30 (Lys-30) is an N6-succinyllysine; alternate. Lys-59 bears the N6-succinyllysine mark. NAD(+)-binding positions include Lys-180 and 232 to 236; that span reads GSVPT. The active-site Proton acceptor is the Glu-254. The active-site Nucleophile is the Cys-288. At Lys-298 the chain carries N6-acetyllysine. N6-acetyllysine; alternate is present on Lys-303. Lys-303 carries the N6-succinyllysine; alternate modification. N6-acetyllysine is present on Lys-344. Glu-391 contributes to the NAD(+) binding site.

The protein belongs to the aldehyde dehydrogenase family. In terms of assembly, homotetramer. As to expression, detected in brain (at protein level). High expression in adult liver, skeletal muscle, and kidney. Low levels in heart, pancreas, lung and brain. Expressed in all regions of the brain. Expression levels are variable in the different brain areas, with the highest levels in the spinal cord and the lowest in the occipital pole.

The protein resides in the cytoplasm. Its subcellular location is the cytosol. The catalysed reaction is 4-(trimethylamino)butanal + NAD(+) + H2O = 4-(trimethylamino)butanoate + NADH + 2 H(+). It carries out the reaction an aldehyde + NAD(+) + H2O = a carboxylate + NADH + 2 H(+). It catalyses the reaction 4-aminobutanal + NAD(+) + H2O = 4-aminobutanoate + NADH + 2 H(+). The enzyme catalyses formaldehyde + NAD(+) + H2O = formate + NADH + 2 H(+). The catalysed reaction is acetaldehyde + NAD(+) + H2O = acetate + NADH + 2 H(+). It carries out the reaction imidazole-4-acetaldehyde + NAD(+) + H2O = imidazole-4-acetate + NADH + 2 H(+). It catalyses the reaction acrolein + NAD(+) + H2O = acrylate + NADH + 2 H(+). The enzyme catalyses (5-hydroxyindol-3-yl)acetaldehyde + NAD(+) + H2O = (5-hydroxyindol-3-yl)acetate + NADH + 2 H(+). The catalysed reaction is 3,4-dihydroxyphenylacetaldehyde + NAD(+) + H2O = 3,4-dihydroxyphenylacetate + NADH + 2 H(+). It carries out the reaction spermine monoaldehyde + NAD(+) + H2O = N-(2-carboxyethyl)spermidine + NADH + 2 H(+). It catalyses the reaction propanal + NAD(+) + H2O = propanoate + NADH + 2 H(+). The enzyme catalyses butanal + NAD(+) + H2O = butanoate + NADH + 2 H(+). The catalysed reaction is pentanal + NAD(+) + H2O = pentanoate + NADH + 2 H(+). It carries out the reaction hexanal + NAD(+) + H2O = hexanoate + NADH + 2 H(+). It participates in amine and polyamine biosynthesis; carnitine biosynthesis. In terms of biological role, converts gamma-trimethylaminobutyraldehyde into gamma-butyrobetaine with high efficiency (in vitro). Can catalyze the irreversible oxidation of a broad range of aldehydes to the corresponding acids in an NAD-dependent reaction, but with low efficiency. Catalyzes the oxidation of aldehydes arising from biogenic amines and polyamines. The chain is 4-trimethylaminobutyraldehyde dehydrogenase (ALDH9A1) from Homo sapiens (Human).